A 363-amino-acid chain; its full sequence is N-acetylmuramate/N-acetylglucosamine kinase (363 aa).

This sequence belongs to the kinase AmgK family.

It carries out the reaction N-acetyl-D-muramate + ATP = N-acetyl-alpha-D-muramate 1-phosphate + ADP + H(+). It catalyses the reaction N-acetyl-D-glucosamine + ATP = N-acetyl-alpha-D-glucosamine 1-phosphate + ADP + H(+). It functions in the pathway cell wall biogenesis; peptidoglycan recycling. Functionally, sugar kinase that catalyzes the ATP-dependent phosphorylation of N-acetylmuramate (MurNAc) and N-acetylglucosamine (GlcNAc) at its C1 hydroxyl group, leading to MurNAc alpha-1P and GlcNAc alpha-1P, respectively. Is likely involved in peptidoglycan recycling as part of a cell wall recycling pathway that bypasses de novo biosynthesis of the peptidoglycan precursor UDP-MurNAc. Is able to complement the fosfomycin sensitivity phenotype of a P.putida mutant lacking amgK. The polypeptide is N-acetylmuramate/N-acetylglucosamine kinase (Caulobacter vibrioides (strain ATCC 19089 / CIP 103742 / CB 15) (Caulobacter crescentus)).